Reading from the N-terminus, the 161-residue chain is uncharacterized protein (161 aa).

Residues 5–25 traverse the membrane as a helical segment; that stretch reads GPTLLSLLAALLVSLGLLLWY.

It belongs to the IIV-6 203L/325L family.

The protein resides in the membrane. This is an uncharacterized protein from Invertebrate iridescent virus 3 (IIV-3).